The primary structure comprises 140 residues: Large ribosomal subunit protein uL11 (140 aa).

The protein belongs to the universal ribosomal protein uL11 family. In terms of assembly, part of the ribosomal stalk of the 50S ribosomal subunit. Interacts with L10 and the large rRNA to form the base of the stalk. L10 forms an elongated spine to which L12 dimers bind in a sequential fashion forming a multimeric L10(L12)X complex. In terms of processing, one or more lysine residues are methylated.

Forms part of the ribosomal stalk which helps the ribosome interact with GTP-bound translation factors. This Solidesulfovibrio magneticus (strain ATCC 700980 / DSM 13731 / RS-1) (Desulfovibrio magneticus) protein is Large ribosomal subunit protein uL11.